Reading from the N-terminus, the 489-residue chain is Aklavinone 12-hydroxylase DnrF (489 aa).

FAD is bound by residues 17 to 18 (LG), Glu37, Gln121, and Leu145. Tyr224 (proton acceptor) is an active-site residue. Position 308 (Asp308) interacts with FAD. Position 317 (Gly317) interacts with aklavinone. 2 disordered regions span residues 402-428 (VAAE…RAPH) and 455-489 (EGGA…PPAN). Residues 468-482 (RIWASASTSISSAAM) show a composition bias toward low complexity.

The protein belongs to the PheA/TfdB FAD monooxygenase family. Monomer. It depends on FAD as a cofactor.

The enzyme catalyses aklavinone + NADPH + O2 + H(+) = epsilon-rhodomycinone + NADP(+) + H2O. Its pathway is antibiotic biosynthesis; daunorubicin biosynthesis. It functions in the pathway antibiotic biosynthesis; carminomycin biosynthesis. The protein operates within antibiotic biosynthesis; rhodomycin biosynthesis. Its function is as follows. Involved in the biosynthesis of the anthracyclines carminomycin, rhodomycin and daunorubicin (daunomycin) which are aromatic polyketide antibiotics that exhibit high cytotoxicity and are widely applied in the chemotherapy of a variety of cancers. Catalyzes the incorporation of a hydroxyl group at position C-11 of aklavinone, resulting in epsilon-rhodomycinone. It cannot accept substrates glycosylated at position C-7. It can also hydroxylate 11-deoxycarminomycinone and can use both NAD or NADP. In Streptomyces peucetius, this protein is Aklavinone 12-hydroxylase DnrF (dnrF).